We begin with the raw amino-acid sequence, 244 residues long: Putative ribosomal recycling factor, mitochondrial (244 aa).

The protein belongs to the RRF family.

The protein localises to the mitochondrion. Its function is as follows. Necessary for protein synthesis in mitochondria. Functions as a ribosome recycling factor in mitochondria. The sequence is that of Putative ribosomal recycling factor, mitochondrial (rrf1) from Schizosaccharomyces pombe (strain 972 / ATCC 24843) (Fission yeast).